Here is a 184-residue protein sequence, read N- to C-terminus: Photosynthetic apparatus regulatory protein RegA (184 aa).

One can recognise a Response regulatory domain in the interval 14-128 (SLLLVDDDEP…EVTHALLAKG (115 aa)).

Post-translationally, phosphorylated by RegB.

Functionally, member of the two-component regulatory system RegB/RegA. Involved in transactivating anaerobic expression of the photosynthetic apparatus. It is a transcriptional regulator that is responsible for activating expression of the puf, puh, and puc operons in response to a decrease in oxygen tension. The polypeptide is Photosynthetic apparatus regulatory protein RegA (regA) (Cereibacter sphaeroides (strain ATCC 17023 / DSM 158 / JCM 6121 / CCUG 31486 / LMG 2827 / NBRC 12203 / NCIMB 8253 / ATH 2.4.1.) (Rhodobacter sphaeroides)).